A 380-amino-acid chain; its full sequence is 1-deoxy-D-xylulose 5-phosphate reductoisomerase (380 aa).

Thr10, Gly11, Ser12, Ile13, Gly35, and Asn121 together coordinate NADPH. Lys122 contacts 1-deoxy-D-xylulose 5-phosphate. Residue Glu123 coordinates NADPH. Mn(2+) is bound at residue Asp147. Residues Ser148, Glu149, Ser173, and His196 each coordinate 1-deoxy-D-xylulose 5-phosphate. Glu149 contacts Mn(2+). Residue Gly202 participates in NADPH binding. Residues Ser209, Asn214, Lys215, and Glu218 each contribute to the 1-deoxy-D-xylulose 5-phosphate site. Residue Glu218 coordinates Mn(2+).

Belongs to the DXR family. The cofactor is Mg(2+). Mn(2+) serves as cofactor.

The catalysed reaction is 2-C-methyl-D-erythritol 4-phosphate + NADP(+) = 1-deoxy-D-xylulose 5-phosphate + NADPH + H(+). The protein operates within isoprenoid biosynthesis; isopentenyl diphosphate biosynthesis via DXP pathway; isopentenyl diphosphate from 1-deoxy-D-xylulose 5-phosphate: step 1/6. Functionally, catalyzes the NADPH-dependent rearrangement and reduction of 1-deoxy-D-xylulose-5-phosphate (DXP) to 2-C-methyl-D-erythritol 4-phosphate (MEP). This chain is 1-deoxy-D-xylulose 5-phosphate reductoisomerase, found in Lachnospira eligens (strain ATCC 27750 / DSM 3376 / VPI C15-48 / C15-B4) (Eubacterium eligens).